A 423-amino-acid polypeptide reads, in one-letter code: MGCFGCSKKSSKRSETNKDTVINRKIVGGTTSVAKSDKRDDQTQPSSDSTKVSPYRDVNNEGGVGKEDQLSLDVKGLNLNDQVTGKKAQTFTFQELAEATGNFRSDCFLGEGGFGKVFKGTIEKLDQVVAIKQLDRNGVQGIREFVVEVLTLSLADHPNLVKLIGFCAEGDQRLLVYEYMPQGSLEDHLHVLPSGKKPLDWNTRMKIAAGAARGLEYLHDRMTPPVIYRDLKCSNILLGEDYQPKLSDFGLAKVGPSGDKTHVSTRVMGTYGYCAPDYAMTGQLTFKSDIYSFGVVLLELITGRKAIDNTKTRKDQNLVGWARPLFKDRRNFPKMVDPLLQGQYPVRGLYQALAISAMCVQEQPTMRPVVSDVVLALNFLASSKYDPNSPSSSSGKNPSFHRDRDDEEKRPHLVKETECEGSS.

The segment at 1–66 is disordered; that stretch reads MGCFGCSKKS…DVNNEGGVGK (66 aa). A lipid anchor (N-myristoyl glycine) is attached at Gly-2. Cys-3 carries S-palmitoyl cysteine lipidation. Residues 12–22 show a composition bias toward basic and acidic residues; sequence KRSETNKDTVI. The segment covering 43-52 has biased composition (polar residues); the sequence is TQPSSDSTKV. Position 92 is a phosphothreonine (Thr-92). A Protein kinase domain is found at 103-380; the sequence is FRSDCFLGEG…SDVVLALNFL (278 aa). ATP-binding positions include 109–117 and Lys-132; that span reads LGEGGFGKV. The residue at position 177 (Tyr-177) is a Phosphotyrosine. Asp-230 serves as the catalytic Proton acceptor. Phosphoserine is present on residues Ser-234 and Ser-264. Phosphothreonine is present on residues Thr-265 and Thr-270. Tyr-278 is subject to Phosphotyrosine. Over residues 383–398 the composition is skewed to low complexity; that stretch reads SKYDPNSPSSSSGKNP. Positions 383–423 are disordered; sequence SKYDPNSPSSSSGKNPSFHRDRDDEEKRPHLVKETECEGSS. The span at 400–423 shows a compositional bias: basic and acidic residues; it reads FHRDRDDEEKRPHLVKETECEGSS.

It belongs to the protein kinase superfamily. Ser/Thr protein kinase family. In terms of processing, palmitoylation at Cys-3 and Cys-6 are required for plasma membrane location.

Its subcellular location is the cell membrane. It catalyses the reaction L-seryl-[protein] + ATP = O-phospho-L-seryl-[protein] + ADP + H(+). It carries out the reaction L-threonyl-[protein] + ATP = O-phospho-L-threonyl-[protein] + ADP + H(+). Its function is as follows. May be involved in plant defense signaling. This chain is Probable serine/threonine-protein kinase PBL5, found in Arabidopsis thaliana (Mouse-ear cress).